Here is a 452-residue protein sequence, read N- to C-terminus: Cobyrinate a,c-diamide synthase (452 aa).

The GATase cobBQ-type domain occupies 248-441 (RVAYALDAAF…LHIHFYQNLL (194 aa)). The Nucleophile role is filled by Cys330.

This sequence belongs to the CobB/CbiA family. It depends on Mg(2+) as a cofactor.

It carries out the reaction cob(II)yrinate + 2 L-glutamine + 2 ATP + 2 H2O = cob(II)yrinate a,c diamide + 2 L-glutamate + 2 ADP + 2 phosphate + 2 H(+). The protein operates within cofactor biosynthesis; adenosylcobalamin biosynthesis; cob(II)yrinate a,c-diamide from sirohydrochlorin (anaerobic route): step 10/10. Catalyzes the ATP-dependent amidation of the two carboxylate groups at positions a and c of cobyrinate, using either L-glutamine or ammonia as the nitrogen source. The protein is Cobyrinate a,c-diamide synthase of Listeria monocytogenes serotype 4b (strain F2365).